The following is a 317-amino-acid chain: Exopolysaccharide production protein ExoZ (317 aa).

The next 7 helical transmembrane spans lie at 14–34, 53–73, 100–120, 132–152, 185–205, 206–226, and 268–288; these read TIGA…MWVI, IVPV…AGLF, IWPV…YAVF, LPVV…VAFD, LAVG…IGVL, GLPF…IGVL, and IGLG…LIGI.

The protein belongs to the acyltransferase 3 family.

The protein resides in the cell membrane. Required for the acetyl modification of the third sugar (glucose) of the octasaccharide subunit of succinoglycan (EPS I). The polypeptide is Exopolysaccharide production protein ExoZ (exoZ) (Rhizobium meliloti (strain 1021) (Ensifer meliloti)).